Here is a 193-residue protein sequence, read N- to C-terminus: Peptidyl-tRNA hydrolase (193 aa).

Residue tyrosine 17 participates in tRNA binding. Histidine 22 (proton acceptor) is an active-site residue. Tyrosine 68, asparagine 70, and asparagine 116 together coordinate tRNA.

Belongs to the PTH family. As to quaternary structure, monomer.

Its subcellular location is the cytoplasm. It carries out the reaction an N-acyl-L-alpha-aminoacyl-tRNA + H2O = an N-acyl-L-amino acid + a tRNA + H(+). Functionally, hydrolyzes ribosome-free peptidyl-tRNAs (with 1 or more amino acids incorporated), which drop off the ribosome during protein synthesis, or as a result of ribosome stalling. Its function is as follows. Catalyzes the release of premature peptidyl moieties from peptidyl-tRNA molecules trapped in stalled 50S ribosomal subunits, and thus maintains levels of free tRNAs and 50S ribosomes. The chain is Peptidyl-tRNA hydrolase from Acinetobacter baumannii (strain AB0057).